Consider the following 823-residue polypeptide: Protein Jade-3 (823 aa).

Positions 1–40 (MKRHRPVSSSESSDECPSTSFTSSSMYRKKSKNPKEQKKS) are disordered. Residues 8–20 (SSSESSDECPSTS) show a composition bias toward low complexity. An N6-acetyllysine mark is found at Lys30, Lys32, and Lys35. The PHD-type 1 zinc-finger motif lies at 200–250 (DVICDVCRSPDSEEGNDMVFCDKCNVCVHQACYGILKIPEGSWLCRSCVLG). Residues 252–286 (YPQCVLCPKKGGAMKTTRTGTKWAHVSCALWIPEV) form a C2HC pre-PHD-type zinc finger. Residues 310–366 (LVCNLCKLKTGACIQCSVKSCITAFHVTCAFEHGLEMKTILDEGDEVKFKSFCLKHS) form a PHD-type 2 zinc finger. Disordered stretches follow at residues 543 to 585 (LKMP…PEEP) and 601 to 631 (KSNC…AEFY). Residues 549–562 (TSEDCKDSSTETEH) show a composition bias toward basic and acidic residues. A phosphoserine mark is found at Ser566 and Ser578. Lys601 carries the post-translational modification N6-acetyllysine. Ser608 is modified (phosphoserine). Lys638 is subject to N6-acetyllysine. Positions 651-676 (SIGNGKNQPNSRVSSSNGLEGNWSGN) are disordered. At Lys735 the chain carries N6-acetyllysine. Residues 756 to 823 (TGRASYQETD…HPHSHSSMQR (68 aa)) form a disordered region. Residues Ser774 and Ser776 each carry the phosphoserine modification. Residues 781–809 (EGSKETPRVKRESSDRENPSHDSARECHG) are compositionally biased toward basic and acidic residues.

Belongs to the JADE family. Component of the HBO1 complex composed at least of ING4 or ING5, MYST2/HBO1, MEAF6, and one of JADE1, JADE2 and JADE3.

Its function is as follows. Scaffold subunit of some HBO1 complexes, which have a histone H4 acetyltransferase activity. The protein is Protein Jade-3 (Jade3) of Mus musculus (Mouse).